Here is a 79-residue protein sequence, read N- to C-terminus: Small ribosomal subunit protein uS17 (79 aa).

It belongs to the universal ribosomal protein uS17 family. In terms of assembly, part of the 30S ribosomal subunit.

Functionally, one of the primary rRNA binding proteins, it binds specifically to the 5'-end of 16S ribosomal RNA. This Caulobacter sp. (strain K31) protein is Small ribosomal subunit protein uS17.